Here is a 669-residue protein sequence, read N- to C-terminus: DNA ligase (669 aa).

Residues 35–39 (DSVYD), 84–85 (SL), and E116 each bind NAD(+). The active-site N6-AMP-lysine intermediate is K118. NAD(+) contacts are provided by R139, E176, K291, and K315. Positions 409, 412, 427, and 432 each coordinate Zn(2+). Positions 591–669 (TTKATLAGKT…EAQLLELIKA (79 aa)) constitute a BRCT domain.

The protein belongs to the NAD-dependent DNA ligase family. LigA subfamily. The cofactor is Mg(2+). Mn(2+) serves as cofactor.

The catalysed reaction is NAD(+) + (deoxyribonucleotide)n-3'-hydroxyl + 5'-phospho-(deoxyribonucleotide)m = (deoxyribonucleotide)n+m + AMP + beta-nicotinamide D-nucleotide.. In terms of biological role, DNA ligase that catalyzes the formation of phosphodiester linkages between 5'-phosphoryl and 3'-hydroxyl groups in double-stranded DNA using NAD as a coenzyme and as the energy source for the reaction. It is essential for DNA replication and repair of damaged DNA. In Microcystis aeruginosa (strain NIES-843 / IAM M-2473), this protein is DNA ligase.